Here is a 217-residue protein sequence, read N- to C-terminus: 8-oxoguanine DNA glycosylase/AP lyase (217 aa).

Catalysis depends on residues K138 and D157.

This sequence belongs to the type-2 OGG1 family.

It catalyses the reaction 2'-deoxyribonucleotide-(2'-deoxyribose 5'-phosphate)-2'-deoxyribonucleotide-DNA = a 3'-end 2'-deoxyribonucleotide-(2,3-dehydro-2,3-deoxyribose 5'-phosphate)-DNA + a 5'-end 5'-phospho-2'-deoxyribonucleoside-DNA + H(+). Functionally, catalyzes the excision of an oxidatively damaged form of guanine (7,8-dihydro-8-oxoguanine = 8-oxoG) from DNA. Also cleaves the DNA backbone at apurinic/apyrimidinic sites (AP sites). The protein is 8-oxoguanine DNA glycosylase/AP lyase of Fusobacterium nucleatum subsp. nucleatum (strain ATCC 25586 / DSM 15643 / BCRC 10681 / CIP 101130 / JCM 8532 / KCTC 2640 / LMG 13131 / VPI 4355).